The sequence spans 130 residues: Keratin, high-sulfur matrix protein, IIIA3A (130 aa).

In terms of tissue distribution, wool.

Functionally, the keratin products of mammalian epidermal derivatives such as wool and hair consist of microfibrils embedded in a rigid matrix of other proteins. The matrix proteins include the high-sulfur and high-tyrosine keratins, having molecular weights of 6-20 kDa, whereas the microfibrils contain the larger, low-sulfur keratins (40-56 kDa). This Ovis aries (Sheep) protein is Keratin, high-sulfur matrix protein, IIIA3A.